Consider the following 180-residue polypeptide: Transcriptional repressor NrdR (180 aa).

A zinc finger lies at 3-34; that stretch reads CPRCSKQEIRVLESRSAEGGQSVRRRRECMSC. Residues 49–139 form the ATP-cone domain; the sequence is IMVIKRDGSR…VYRQFQGIKD (91 aa). The segment at 155–180 is disordered; the sequence is LERLLQDSSASDSESSGSPDLVGEYS. Residues 160–174 are compositionally biased toward low complexity; the sequence is QDSSASDSESSGSPD.

The protein belongs to the NrdR family. It depends on Zn(2+) as a cofactor.

Negatively regulates transcription of bacterial ribonucleotide reductase nrd genes and operons by binding to NrdR-boxes. The sequence is that of Transcriptional repressor NrdR from Synechococcus sp. (strain JA-2-3B'a(2-13)) (Cyanobacteria bacterium Yellowstone B-Prime).